A 363-amino-acid chain; its full sequence is 3-isopropylmalate dehydrogenase (363 aa).

An NAD(+)-binding site is contributed by 78 to 91 (XXXXXXXXXXXXXX). Substrate contacts are provided by R99, R109, R138, and D227. Residues D227, D251, and D255 each coordinate Mg(2+). 285–297 (GSAPDIEGKNIAN) is a binding site for NAD(+).

This sequence belongs to the isocitrate and isopropylmalate dehydrogenases family. LeuB type 1 subfamily. Homodimer. It depends on Mg(2+) as a cofactor. Requires Mn(2+) as cofactor.

The protein resides in the cytoplasm. It catalyses the reaction (2R,3S)-3-isopropylmalate + NAD(+) = 4-methyl-2-oxopentanoate + CO2 + NADH. It participates in amino-acid biosynthesis; L-leucine biosynthesis; L-leucine from 3-methyl-2-oxobutanoate: step 3/4. In terms of biological role, catalyzes the oxidation of 3-carboxy-2-hydroxy-4-methylpentanoate (3-isopropylmalate) to 3-carboxy-4-methyl-2-oxopentanoate. The product decarboxylates to 4-methyl-2 oxopentanoate. In Buchnera aphidicola subsp. Uroleucon solidaginis, this protein is 3-isopropylmalate dehydrogenase.